The primary structure comprises 182 residues: tRNA-splicing endonuclease (182 aa).

Catalysis depends on residues Y119, H127, and K158.

Belongs to the tRNA-intron endonuclease family. Archaeal short subfamily. Homotetramer; although the tetramer contains four active sites, only two participate in the cleavage. Therefore, it should be considered as a dimer of dimers.

It catalyses the reaction pretRNA = a 3'-half-tRNA molecule with a 5'-OH end + a 5'-half-tRNA molecule with a 2',3'-cyclic phosphate end + an intron with a 2',3'-cyclic phosphate and a 5'-hydroxyl terminus.. Its function is as follows. Endonuclease that removes tRNA introns. Cleaves pre-tRNA at the 5'- and 3'-splice sites to release the intron. The products are an intron and two tRNA half-molecules bearing 2',3' cyclic phosphate and 5'-OH termini. Recognizes a pseudosymmetric substrate in which 2 bulged loops of 3 bases are separated by a stem of 4 bp. The sequence is that of tRNA-splicing endonuclease from Saccharolobus islandicus (strain L.S.2.15 / Lassen #1) (Sulfolobus islandicus).